The sequence spans 370 residues: NAD-dependent histone deacetylase HST4 (370 aa).

The interval 1-27 is disordered; sequence MKQKFVLPITPPSTAEKKPQTENRCNE. Residues 15-27 are compositionally biased toward basic and acidic residues; it reads AEKKPQTENRCNE. Positions 75–370 constitute a Deacetylase sirtuin-type domain; it reads RHHMDRDAGF…GDCQHVTSLL (296 aa). NAD(+) is bound by residues 100–119 and 184–187; these read GAGI…EGIF and QNID. Histidine 213 (proton acceptor) is an active-site residue. Zn(2+) contacts are provided by cysteine 221, cysteine 224, cysteine 251, and cysteine 254. Residues 310 to 312, 340 to 342, and cysteine 363 each bind NAD(+); these read GTS and NTS.

The protein belongs to the sirtuin family. Class I subfamily. It depends on Zn(2+) as a cofactor.

It is found in the nucleus. The enzyme catalyses N(6)-acetyl-L-lysyl-[protein] + NAD(+) + H2O = 2''-O-acetyl-ADP-D-ribose + nicotinamide + L-lysyl-[protein]. Its function is as follows. NAD-dependent histone deacetylase, which contributes together with HST3 to histone H3 'Lys-56' deacetylation, regulation of telomeric silencing, proper cell cycle progression, DNA damage control, DNA recombination, and genomic maintenance. This Saccharomyces cerevisiae (strain ATCC 204508 / S288c) (Baker's yeast) protein is NAD-dependent histone deacetylase HST4 (HST4).